The following is a 306-amino-acid chain: Ribonuclease Z (306 aa).

7 residues coordinate Zn(2+): H63, H65, D67, H68, H140, D211, and H269. Residue D67 is the Proton acceptor of the active site.

It belongs to the RNase Z family. In terms of assembly, homodimer. Zn(2+) is required as a cofactor.

The catalysed reaction is Endonucleolytic cleavage of RNA, removing extra 3' nucleotides from tRNA precursor, generating 3' termini of tRNAs. A 3'-hydroxy group is left at the tRNA terminus and a 5'-phosphoryl group is left at the trailer molecule.. In terms of biological role, zinc phosphodiesterase, which displays some tRNA 3'-processing endonuclease activity. Probably involved in tRNA maturation, by removing a 3'-trailer from precursor tRNA. This Listeria monocytogenes serovar 1/2a (strain ATCC BAA-679 / EGD-e) protein is Ribonuclease Z.